The following is a 142-amino-acid chain: Large ribosomal subunit protein uL11 (142 aa).

The protein belongs to the universal ribosomal protein uL11 family. Part of the ribosomal stalk of the 50S ribosomal subunit. Interacts with L10 and the large rRNA to form the base of the stalk. L10 forms an elongated spine to which L12 dimers bind in a sequential fashion forming a multimeric L10(L12)X complex. Post-translationally, one or more lysine residues are methylated.

In terms of biological role, forms part of the ribosomal stalk which helps the ribosome interact with GTP-bound translation factors. The polypeptide is Large ribosomal subunit protein uL11 (Vibrio cholerae serotype O1 (strain ATCC 39541 / Classical Ogawa 395 / O395)).